We begin with the raw amino-acid sequence, 158 residues long: Ribosomal RNA large subunit methyltransferase H (158 aa).

S-adenosyl-L-methionine contacts are provided by residues L74, G105, and 124–129 (LGPLTL).

Belongs to the RNA methyltransferase RlmH family. In terms of assembly, homodimer.

The protein localises to the cytoplasm. It carries out the reaction pseudouridine(1915) in 23S rRNA + S-adenosyl-L-methionine = N(3)-methylpseudouridine(1915) in 23S rRNA + S-adenosyl-L-homocysteine + H(+). Specifically methylates the pseudouridine at position 1915 (m3Psi1915) in 23S rRNA. The protein is Ribosomal RNA large subunit methyltransferase H of Xylella fastidiosa (strain Temecula1 / ATCC 700964).